A 521-amino-acid polypeptide reads, in one-letter code: Protein NRT1/ PTR FAMILY 4.2 (521 aa).

Helical transmembrane passes span 30–50, 65–85, 89–109, 133–153, 172–192, 204–224, 297–317, 338–358, 381–401, 413–433, 451–471, and 498–518; these read IVCV…FNFV, ANMV…GGFI, FVTH…GLIL, AILF…KASL, FFDW…TVVL, FNIS…GLPF, FLGL…VAQL, IPVP…IPLY, IGLG…VEAK, ISVL…MLTL, ISTA…TTLV, and LFYV…IFWA.

This sequence belongs to the major facilitator superfamily. Proton-dependent oligopeptide transporter (POT/PTR) (TC 2.A.17) family. As to expression, expressed in siliques.

It localises to the membrane. Its function is as follows. Involved in abscisic acid transport. The chain is Protein NRT1/ PTR FAMILY 4.2 (NPF4.2) from Arabidopsis thaliana (Mouse-ear cress).